Reading from the N-terminus, the 158-residue chain is NAD(P)H-quinone oxidoreductase subunit J, chloroplastic (158 aa).

This sequence belongs to the complex I 30 kDa subunit family. In terms of assembly, NDH is composed of at least 16 different subunits, 5 of which are encoded in the nucleus.

It is found in the plastid. The protein resides in the chloroplast thylakoid membrane. The enzyme catalyses a plastoquinone + NADH + (n+1) H(+)(in) = a plastoquinol + NAD(+) + n H(+)(out). The catalysed reaction is a plastoquinone + NADPH + (n+1) H(+)(in) = a plastoquinol + NADP(+) + n H(+)(out). Functionally, NDH shuttles electrons from NAD(P)H:plastoquinone, via FMN and iron-sulfur (Fe-S) centers, to quinones in the photosynthetic chain and possibly in a chloroplast respiratory chain. The immediate electron acceptor for the enzyme in this species is believed to be plastoquinone. Couples the redox reaction to proton translocation, and thus conserves the redox energy in a proton gradient. The chain is NAD(P)H-quinone oxidoreductase subunit J, chloroplastic from Illicium oligandrum (Star anise).